The primary structure comprises 481 residues: Halobacterial transducer protein 9 (481 aa).

The PAS domain maps to 10–81 (SPFTVPLLLN…NKVADTPIDA (72 aa)). The 237-residue stretch at 208-444 (DVERLEAASQ…EIAAMVDETA (237 aa)) folds into the Methyl-accepting transducer domain.

This sequence belongs to the methyl-accepting chemotaxis (MCP) protein family.

The protein resides in the cytoplasm. Potentially involved in chemo- or phototactic signal transduction. This is Halobacterial transducer protein 9 (htr9) from Halobacterium salinarum (strain ATCC 700922 / JCM 11081 / NRC-1) (Halobacterium halobium).